The sequence spans 253 residues: Zwei Ig domain protein zig-4 (253 aa).

Residues 1–16 (MFAIALLSFLVVLINA) form the signal peptide. Ig-like C2-type domains follow at residues 43-146 (PAKI…AEVE) and 162-245 (PEIV…TFLY). 2 disulfide bridges follow: cysteine 67–cysteine 130 and cysteine 183–cysteine 229.

As to expression, expressed in PVT, ASK, BAG, M2 and ASI neurons. In L1 larvae, expressed in pharyngeal ectoderm and mesoderm.

Its subcellular location is the secreted. Functionally, required for maintaining axon position of PVQ and PVP neurons postembryonically in the ventral nerve cord (VNC) by preventing axons drifting into the opposite side of the VNC that could occur during body growth and movement. The protein is Zwei Ig domain protein zig-4 of Caenorhabditis elegans.